The following is a 741-amino-acid chain: Transcription activator of gluconeogenesis BDBG_05438 (741 aa).

The interval Met-1 to Arg-70 is disordered. Over residues Lys-25–Asn-61 the composition is skewed to polar residues. The zn(2)-C6 fungal-type DNA-binding region spans Cys-77–Cys-105. Disordered stretches follow at residues Gln-135–Ser-163, Ser-202–Gly-239, Gly-285–Ser-321, Thr-401–Lys-421, Gly-559–Gly-590, and Phe-655–Gly-741. Positions Ser-202 to Leu-226 are enriched in polar residues. Residues Ser-227 to Ser-238 show a composition bias toward low complexity. Polar residues-rich tracts occupy residues Pro-291 to Ser-321 and Thr-401 to Ser-416. A compositionally biased stretch (low complexity) spans Ser-560–Ser-572. Polar residues predominate over residues Thr-573–Asp-586. The span at Thr-672–Ser-718 shows a compositional bias: low complexity. The segment covering Arg-723–Gly-732 has biased composition (basic residues).

It belongs to the ERT1/acuK family.

It is found in the nucleus. Functionally, transcription factor which regulates nonfermentable carbon utilization. Activator of gluconeogenetic genes. This is Transcription activator of gluconeogenesis BDBG_05438 from Blastomyces gilchristii (strain SLH14081) (Blastomyces dermatitidis).